The chain runs to 69 residues: Large ribosomal subunit protein uL29 (69 aa).

Belongs to the universal ribosomal protein uL29 family.

This Granulibacter bethesdensis (strain ATCC BAA-1260 / CGDNIH1) protein is Large ribosomal subunit protein uL29.